The primary structure comprises 247 residues: 2,3-bisphosphoglycerate-dependent phosphoglycerate mutase (247 aa).

Substrate contacts are provided by residues 8–15 (RHGESTWN), 21–22 (TG), R60, 87–90 (ERHY), K98, 114–115 (RR), and 183–184 (GN). H9 acts as the Tele-phosphohistidine intermediate in catalysis. The Proton donor/acceptor role is filled by E87.

It belongs to the phosphoglycerate mutase family. BPG-dependent PGAM subfamily. As to quaternary structure, homodimer.

It carries out the reaction (2R)-2-phosphoglycerate = (2R)-3-phosphoglycerate. It participates in carbohydrate degradation; glycolysis; pyruvate from D-glyceraldehyde 3-phosphate: step 3/5. In terms of biological role, catalyzes the interconversion of 2-phosphoglycerate and 3-phosphoglycerate. This Acidovorax sp. (strain JS42) protein is 2,3-bisphosphoglycerate-dependent phosphoglycerate mutase.